Reading from the N-terminus, the 597-residue chain is Phosphomethylpyrimidine synthase (597 aa).

Residues N207, M236, Y265, H301, 321-323, 362-365, and E401 contribute to the substrate site; these read SRG and DGLR. A Zn(2+)-binding site is contributed by H405. Y428 provides a ligand contact to substrate. H469 lines the Zn(2+) pocket. [4Fe-4S] cluster-binding residues include C549, C552, and C557.

The protein belongs to the ThiC family. As to quaternary structure, homodimer. It depends on [4Fe-4S] cluster as a cofactor.

It catalyses the reaction 5-amino-1-(5-phospho-beta-D-ribosyl)imidazole + S-adenosyl-L-methionine = 4-amino-2-methyl-5-(phosphooxymethyl)pyrimidine + CO + 5'-deoxyadenosine + formate + L-methionine + 3 H(+). The protein operates within cofactor biosynthesis; thiamine diphosphate biosynthesis. Catalyzes the synthesis of the hydroxymethylpyrimidine phosphate (HMP-P) moiety of thiamine from aminoimidazole ribotide (AIR) in a radical S-adenosyl-L-methionine (SAM)-dependent reaction. In Gluconobacter oxydans (strain 621H) (Gluconobacter suboxydans), this protein is Phosphomethylpyrimidine synthase.